A 315-amino-acid polypeptide reads, in one-letter code: Methionyl-tRNA formyltransferase (315 aa).

Position 113–116 (113–116 (SLLP)) interacts with (6S)-5,6,7,8-tetrahydrofolate.

It belongs to the Fmt family.

The enzyme catalyses L-methionyl-tRNA(fMet) + (6R)-10-formyltetrahydrofolate = N-formyl-L-methionyl-tRNA(fMet) + (6S)-5,6,7,8-tetrahydrofolate + H(+). Attaches a formyl group to the free amino group of methionyl-tRNA(fMet). The formyl group appears to play a dual role in the initiator identity of N-formylmethionyl-tRNA by promoting its recognition by IF2 and preventing the misappropriation of this tRNA by the elongation apparatus. In Cronobacter sakazakii (strain ATCC BAA-894) (Enterobacter sakazakii), this protein is Methionyl-tRNA formyltransferase.